Consider the following 518-residue polypeptide: Laccase (518 aa).

Positions 1–21 are cleaved as a signal peptide; sequence MSRFQSLLSFVLVSLAAVANA. Plastocyanin-like domains lie at 23 to 148 and 160 to 302; these read IGPV…FVVY and IDND…ILRY. Asn72 and Asn75 each carry an N-linked (GlcNAc...) asparagine glycan. Positions 85, 87, 130, and 132 each coordinate Cu cation. 2 disulfide bridges follow: Cys106-Cys507 and Cys138-Cys226. Residue Asn229 is glycosylated (N-linked (GlcNAc...) asparagine). A disordered region spans residues 308 to 330; the sequence is VEPTTTQTTSTKPLNEADLHPLT. Residues Asn354, Asn362, and Asn398 are each glycosylated (N-linked (GlcNAc...) asparagine). The region spanning 369-489 is the Plastocyanin-like 3 domain; sequence SVPVLLQILS…AGFAVVLAED (121 aa). Cu cation-binding residues include His416, His419, His421, His471, Cys472, His473, and His477.

The protein belongs to the multicopper oxidase family. It depends on Cu cation as a cofactor.

It localises to the secreted. The enzyme catalyses 4 hydroquinone + O2 = 4 benzosemiquinone + 2 H2O. In terms of biological role, lignin degradation and detoxification of lignin-derived products. Cleaves the C-C and C-O bonds of some phenolic lignin model compounds (such as O- and P-quinols, aminophenols and phenylenediamine). May also be involved in synthesis of phenoxazinone pigments. The protein is Laccase (LCC3-1) of Pycnoporus cinnabarinus (Cinnabar-red polypore).